A 186-amino-acid chain; its full sequence is Pyridoxal 5'-phosphate synthase subunit PdxT (186 aa).

46–48 (GES) lines the L-glutamine pocket. Catalysis depends on C78, which acts as the Nucleophile. Residues R105 and 134–135 (IR) contribute to the L-glutamine site. Active-site charge relay system residues include H170 and E172.

The protein belongs to the glutaminase PdxT/SNO family. As to quaternary structure, in the presence of PdxS, forms a dodecamer of heterodimers. Only shows activity in the heterodimer.

It catalyses the reaction aldehydo-D-ribose 5-phosphate + D-glyceraldehyde 3-phosphate + L-glutamine = pyridoxal 5'-phosphate + L-glutamate + phosphate + 3 H2O + H(+). It carries out the reaction L-glutamine + H2O = L-glutamate + NH4(+). It participates in cofactor biosynthesis; pyridoxal 5'-phosphate biosynthesis. Functionally, catalyzes the hydrolysis of glutamine to glutamate and ammonia as part of the biosynthesis of pyridoxal 5'-phosphate. The resulting ammonia molecule is channeled to the active site of PdxS. This is Pyridoxal 5'-phosphate synthase subunit PdxT from Clostridium acetobutylicum (strain ATCC 824 / DSM 792 / JCM 1419 / IAM 19013 / LMG 5710 / NBRC 13948 / NRRL B-527 / VKM B-1787 / 2291 / W).